The following is a 249-amino-acid chain: DNA repair protein RecO (249 aa).

Belongs to the RecO family.

Its function is as follows. Involved in DNA repair and RecF pathway recombination. The chain is DNA repair protein RecO from Polaromonas sp. (strain JS666 / ATCC BAA-500).